A 252-amino-acid polypeptide reads, in one-letter code: Imidazole glycerol phosphate synthase subunit HisF (252 aa).

Active-site residues include Asp-11 and Asp-130.

The protein belongs to the HisA/HisF family. Heterodimer of HisH and HisF.

Its subcellular location is the cytoplasm. The catalysed reaction is 5-[(5-phospho-1-deoxy-D-ribulos-1-ylimino)methylamino]-1-(5-phospho-beta-D-ribosyl)imidazole-4-carboxamide + L-glutamine = D-erythro-1-(imidazol-4-yl)glycerol 3-phosphate + 5-amino-1-(5-phospho-beta-D-ribosyl)imidazole-4-carboxamide + L-glutamate + H(+). The protein operates within amino-acid biosynthesis; L-histidine biosynthesis; L-histidine from 5-phospho-alpha-D-ribose 1-diphosphate: step 5/9. Its function is as follows. IGPS catalyzes the conversion of PRFAR and glutamine to IGP, AICAR and glutamate. The HisF subunit catalyzes the cyclization activity that produces IGP and AICAR from PRFAR using the ammonia provided by the HisH subunit. The polypeptide is Imidazole glycerol phosphate synthase subunit HisF (Lacticaseibacillus casei (strain BL23) (Lactobacillus casei)).